We begin with the raw amino-acid sequence, 241 residues long: Triosephosphate isomerase (241 aa).

Residue 9-11 (NWK) coordinates substrate. Histidine 96 serves as the catalytic Electrophile. Glutamate 165 serves as the catalytic Proton acceptor. Substrate-binding positions include glycine 171, serine 204, and 225–226 (GG).

Belongs to the triosephosphate isomerase family. In terms of assembly, homodimer.

It localises to the cytoplasm. It catalyses the reaction D-glyceraldehyde 3-phosphate = dihydroxyacetone phosphate. It participates in carbohydrate biosynthesis; gluconeogenesis. Its pathway is carbohydrate degradation; glycolysis; D-glyceraldehyde 3-phosphate from glycerone phosphate: step 1/1. Its function is as follows. Involved in the gluconeogenesis. Catalyzes stereospecifically the conversion of dihydroxyacetone phosphate (DHAP) to D-glyceraldehyde-3-phosphate (G3P). In Trichormus variabilis (strain ATCC 29413 / PCC 7937) (Anabaena variabilis), this protein is Triosephosphate isomerase.